The primary structure comprises 461 residues: Photosystem II CP43 reaction center protein (461 aa).

The propeptide occupies 1-2; sequence ME. At threonine 3 the chain carries N-acetylthreonine. Threonine 3 is subject to Phosphothreonine. The next 5 helical transmembrane spans lie at 57–81, 122–143, 166–188, 243–263, and 279–300; these read LFEV…PHLA, LLGP…KDRN, KALY…RKIT, KPFA…LSYS, and WFNN…ASQA. Glutamate 355 contacts [CaMn4O5] cluster. The helical transmembrane segment at 435 to 459 threads the bilayer; that stretch reads RARAAAAGFEKGIDRDFEPVLSMTP.

Belongs to the PsbB/PsbC family. PsbC subfamily. In terms of assembly, PSII is composed of 1 copy each of membrane proteins PsbA, PsbB, PsbC, PsbD, PsbE, PsbF, PsbH, PsbI, PsbJ, PsbK, PsbL, PsbM, PsbT, PsbX, PsbY, PsbZ, Psb30/Ycf12, at least 3 peripheral proteins of the oxygen-evolving complex and a large number of cofactors. It forms dimeric complexes. Binds multiple chlorophylls and provides some of the ligands for the Ca-4Mn-5O cluster of the oxygen-evolving complex. It may also provide a ligand for a Cl- that is required for oxygen evolution. PSII binds additional chlorophylls, carotenoids and specific lipids. serves as cofactor.

Its subcellular location is the plastid. The protein localises to the chloroplast thylakoid membrane. One of the components of the core complex of photosystem II (PSII). It binds chlorophyll and helps catalyze the primary light-induced photochemical processes of PSII. PSII is a light-driven water:plastoquinone oxidoreductase, using light energy to abstract electrons from H(2)O, generating O(2) and a proton gradient subsequently used for ATP formation. The sequence is that of Photosystem II CP43 reaction center protein from Gossypium barbadense (Sea Island cotton).